We begin with the raw amino-acid sequence, 300 residues long: Cis-3-alkyl-4-alkyloxetan-2-one decarboxylase (300 aa).

In terms of domain architecture, AB hydrolase-1 spans 33-282 (VVVMLHGNPS…DDANHYVLED (250 aa)).

Belongs to the AB hydrolase superfamily. As to quaternary structure, homotetramer. Forms a complex with OleC and OleD.

It is found in the cytoplasm. The enzyme catalyses a cis-3-alkyl-4-alkyloxetan-2-one = a cis-alkene + CO2. In terms of biological role, involved in olefin biosynthesis. Catalyzes the elimination of carbon dioxide from beta-lactones to form the final olefin product. In Xanthomonas campestris pv. campestris (strain ATCC 33913 / DSM 3586 / NCPPB 528 / LMG 568 / P 25), this protein is Cis-3-alkyl-4-alkyloxetan-2-one decarboxylase.